A 586-amino-acid polypeptide reads, in one-letter code: Probable zinc metalloprotease EGY3, chloroplastic (586 aa).

The N-terminal 54 residues, 1-54 (MASSSLVTSLLFSSSSSSNTATSTSSRRSFSLFSKNQYCKPRPLRRSSSRLLVR), are a transit peptide targeting the chloroplast. 2 disordered regions span residues 13–32 (SSSS…SFSL) and 58–122 (QQQQ…DWRS). The segment covering 61-73 (QEEKAAPAAESHH) has biased composition (basic and acidic residues). Residues 103–195 (VKKSKEELEE…NTFKALDLNK (93 aa)) adopt a coiled-coil conformation. Transmembrane regions (helical) follow at residues 287–307 (LSAV…SGFF), 318–338 (VSDV…SEIA), 389–409 (ASAY…DGSL), 427–447 (PLLS…GNVL), 454–474 (VGVP…VTSL), 506–526 (VALG…WGLF), and 550–570 (YAWG…NGGG).

It belongs to the peptidase M50B family.

It is found in the plastid. The protein localises to the chloroplast membrane. Its function is as follows. Probable membrane-associated metalloprotease that may be involved in chloroplast development. This chain is Probable zinc metalloprotease EGY3, chloroplastic (EGY3), found in Oryza sativa subsp. japonica (Rice).